A 191-amino-acid polypeptide reads, in one-letter code: Large ribosomal subunit protein eL15 (191 aa).

It belongs to the eukaryotic ribosomal protein eL15 family.

This is Large ribosomal subunit protein eL15 (rpl15e) from Pyrobaculum aerophilum (strain ATCC 51768 / DSM 7523 / JCM 9630 / CIP 104966 / NBRC 100827 / IM2).